The following is a 468-amino-acid chain: ATP synthase subunit beta (468 aa).

155–162 (GGAGVGKT) lines the ATP pocket.

It belongs to the ATPase alpha/beta chains family. As to quaternary structure, F-type ATPases have 2 components, CF(1) - the catalytic core - and CF(0) - the membrane proton channel. CF(1) has five subunits: alpha(3), beta(3), gamma(1), delta(1), epsilon(1). CF(0) has three main subunits: a(1), b(2) and c(9-12). The alpha and beta chains form an alternating ring which encloses part of the gamma chain. CF(1) is attached to CF(0) by a central stalk formed by the gamma and epsilon chains, while a peripheral stalk is formed by the delta and b chains.

The protein localises to the cell membrane. The enzyme catalyses ATP + H2O + 4 H(+)(in) = ADP + phosphate + 5 H(+)(out). Produces ATP from ADP in the presence of a proton gradient across the membrane. The catalytic sites are hosted primarily by the beta subunits. The chain is ATP synthase subunit beta from Streptococcus sanguinis (strain SK36).